An 84-amino-acid chain; its full sequence is Large ribosomal subunit protein bL27 (84 aa).

A disordered region spans residues 1-25 (MAHKKGAGSTKNGRDSKPKMLGVKR).

It belongs to the bacterial ribosomal protein bL27 family.

This chain is Large ribosomal subunit protein bL27, found in Dehalococcoides mccartyi (strain ATCC BAA-2266 / KCTC 15142 / 195) (Dehalococcoides ethenogenes (strain 195)).